A 336-amino-acid polypeptide reads, in one-letter code: MKAIGFKSSFQLDEGNCFEEFNFDIPHPSGHELLVKVQSISVNPVDTKQRTMPVDKVPRVLGFDAVGVIEKIGDQVSMFQEGDVVFYSGSPNQNGSNEEYQLIEEYLVAKAPTNLKSEQAASLPLTGLTAYETLFDVFGISKEPSENKGKSLLIINGAGGVGSIATQIAKFYGLKVITTASREDTIKWSVNMGADVVLNHKKDLSQQFKDNHIEGVDYIFCTFDTDMYYEMMVNLVKPRGHIATIVAFNSQQDLNLLKSKSVTFTHEFMFSRPLHHTDDVIKHHEYLKDITEKVEQGYYQPTTTKVIDGLDVDSLYEAHQILESHSMIGKLVINLK.

The protein belongs to the zinc-containing alcohol dehydrogenase family. Quinone oxidoreductase subfamily.

The sequence is that of Zinc-type alcohol dehydrogenase-like protein SE_1777 from Staphylococcus epidermidis (strain ATCC 12228 / FDA PCI 1200).